We begin with the raw amino-acid sequence, 160 residues long: Transcription elongation factor GreA (160 aa).

Positions 1–72 (MAEKTYPMTL…QISSLETKIR (72 aa)) form a coiled coil.

This sequence belongs to the GreA/GreB family.

In terms of biological role, necessary for efficient RNA polymerase transcription elongation past template-encoded arresting sites. The arresting sites in DNA have the property of trapping a certain fraction of elongating RNA polymerases that pass through, resulting in locked ternary complexes. Cleavage of the nascent transcript by cleavage factors such as GreA or GreB allows the resumption of elongation from the new 3'terminus. GreA releases sequences of 2 to 3 nucleotides. In Streptococcus sanguinis (strain SK36), this protein is Transcription elongation factor GreA.